The sequence spans 304 residues: Quinolinate synthase 1 (304 aa).

The iminosuccinate site is built by H24 and S41. Residue C86 coordinates [4Fe-4S] cluster. Iminosuccinate contacts are provided by residues 112–114 (YVN) and S129. [4Fe-4S] cluster is bound at residue C171. Iminosuccinate contacts are provided by residues 197 to 199 (HPE) and T214. Position 259 (C259) interacts with [4Fe-4S] cluster.

Belongs to the quinolinate synthase family. Type 2 subfamily. The cofactor is [4Fe-4S] cluster.

Its subcellular location is the cytoplasm. It catalyses the reaction iminosuccinate + dihydroxyacetone phosphate = quinolinate + phosphate + 2 H2O + H(+). It functions in the pathway cofactor biosynthesis; NAD(+) biosynthesis; quinolinate from iminoaspartate: step 1/1. In terms of biological role, catalyzes the condensation of iminoaspartate with dihydroxyacetone phosphate to form quinolinate. The protein is Quinolinate synthase 1 of Methanosarcina acetivorans (strain ATCC 35395 / DSM 2834 / JCM 12185 / C2A).